Here is a 357-residue protein sequence, read N- to C-terminus: LINE-1 retrotransposable element ORF1 protein (357 aa).

The tract at residues 1-40 is disordered; the sequence is MAKGKRKNPTNRNQDHSPSSERSTPTPPSPGHPNTTENLD. A coiled-coil region spans residues 59 to 156; sequence HKSLKDLQES…IENIDTTVKE (98 aa). The segment at 179–274 is RNA recognition motif (RRM) domain; that stretch reads NLRIIGIDEN…KGRPIRITPD (96 aa). Residues 278–339 form a C-terminal domain (CTD) region; sequence ETMKARRAWT…STNPALQRII (62 aa).

The protein belongs to the transposase 22 family. As to quaternary structure, homotrimer (via coiled coil domain). May also form larger homooligomers. Interacts with Tex19.1 and UBR2. Interacts with MOV10. Post-translationally, polyubiquitinated, probably by UBR2, which induces its degradation. In terms of tissue distribution, expressed in meiotic spermatocytes and in the cerebellum (at protein level).

The protein localises to the nucleus. It is found in the nucleolus. It localises to the cytoplasm. Its subcellular location is the cytoplasmic ribonucleoprotein granule. The protein resides in the stress granule. In terms of biological role, nucleic acid-binding protein which is essential for retrotransposition of LINE-1 elements in the genome. Functions as a nucleic acid chaperone binding its own transcript and therefore preferentially mobilizing the transcript from which they are encoded. This is LINE-1 retrotransposable element ORF1 protein from Mus musculus (Mouse).